The following is a 207-amino-acid chain: Ribosomal RNA small subunit methyltransferase G (207 aa).

Residues glycine 76, glutamine 81, 127–128 (VE), and arginine 141 contribute to the S-adenosyl-L-methionine site.

It belongs to the methyltransferase superfamily. RNA methyltransferase RsmG family.

The protein resides in the cytoplasm. It catalyses the reaction guanosine(527) in 16S rRNA + S-adenosyl-L-methionine = N(7)-methylguanosine(527) in 16S rRNA + S-adenosyl-L-homocysteine. Its function is as follows. Specifically methylates the N7 position of guanine in position 527 of 16S rRNA. In Neisseria meningitidis serogroup C / serotype 2a (strain ATCC 700532 / DSM 15464 / FAM18), this protein is Ribosomal RNA small subunit methyltransferase G.